The following is a 397-amino-acid chain: Cysteine protease ATG4A (397 aa).

C79 acts as the Nucleophile in catalysis. Active-site residues include D279 and H281. The LIR signature appears at 392 to 395 (FEIL).

This sequence belongs to the peptidase C54 family.

The protein resides in the cytoplasm. It carries out the reaction [protein]-C-terminal L-amino acid-glycyl-phosphatidylethanolamide + H2O = [protein]-C-terminal L-amino acid-glycine + a 1,2-diacyl-sn-glycero-3-phosphoethanolamine. Cysteine protease that plays a key role in autophagy by mediating both proteolytic activation and delipidation of ATG8 family proteins. The protease activity is required for proteolytic activation of ATG8 family proteins: cleaves the C-terminal amino acid of ATG8 proteins to reveal a C-terminal glycine. Exposure of the glycine at the C-terminus is essential for ATG8 proteins conjugation to phosphatidylethanolamine (PE) and insertion to membranes, which is necessary for autophagy. Protease activity is also required to counteract formation of high-molecular weight conjugates of ATG8 proteins (ATG8ylation): acts as a deubiquitinating-like enzyme that removes ATG8 conjugated to other proteins, such as ATG3. In addition to the protease activity, also mediates delipidation of ATG8 family proteins. Catalyzes delipidation of PE-conjugated forms of ATG8 proteins during macroautophagy. This is Cysteine protease ATG4A from Xenopus laevis (African clawed frog).